The sequence spans 164 residues: Pyruvoyl-dependent arginine decarboxylase (164 aa).

Ser-52 is subject to Pyruvic acid (Ser).

Belongs to the PdaD family. The cofactor is pyruvate.

The enzyme catalyses L-arginine + H(+) = agmatine + CO2. This Methanococcus maripaludis (strain C7 / ATCC BAA-1331) protein is Pyruvoyl-dependent arginine decarboxylase.